The following is a 110-amino-acid chain: Host transcription reprogramming factor 2 (110 aa).

A signal peptide spans 1–18 (MHLKASSILALLVIGANA). The segment at 68–96 (IMCGYCGKRFWNKPDLEKHIKLKPSKGGH) adopts a C2H2-type zinc-finger fold. Residues 88 to 110 (KLKPSKGGHKGQPYKEHSWNRPT) are disordered. The segment covering 100–110 (PYKEHSWNRPT) has biased composition (basic and acidic residues).

Its subcellular location is the secreted. The protein resides in the host nucleus. In terms of biological role, secreted effector that translocates into the nuclei of host cells to reprogram the expression of immunity-associated genes by binding to effector binding elements (EBEs) in rice. Binds the 5'-CCACCTCC-3' EBE of promoters from targeted rice genes and probably recruits a yet to be determined host repressor. Causes ambivalent immunity with increased susceptibility to the hemibiotrophic pathogens Magnaporthe oryzae and Xanthomonas oryzae pv. oryzae, but enhances resistance to Cochliobolus miyabeanus, a necrotrophic pathogen. The protein is Host transcription reprogramming factor 2 of Pyricularia oryzae (strain 70-15 / ATCC MYA-4617 / FGSC 8958) (Rice blast fungus).